Consider the following 474-residue polypeptide: Cyclin-dependent kinase 18 (474 aa).

Residues serine 14, serine 74, serine 89, serine 98, serine 117, and serine 132 each carry the phosphoserine modification. The disordered stretch occupies residues 44–87 (DLQLGPLGRDPLQECSTFSPTDSGEEPGQLSPGVQFQRRQNQRR). One can recognise a Protein kinase domain in the interval 144–425 (YVKLDKLGEG…AEAALSHPYF (282 aa)). ATP-binding positions include 150–158 (LGEGTYATV) and lysine 173. Catalysis depends on aspartate 265, which acts as the Proton acceptor. Residues serine 440 and serine 443 each carry the phosphoserine modification.

This sequence belongs to the protein kinase superfamily. CMGC Ser/Thr protein kinase family. CDC2/CDKX subfamily.

The catalysed reaction is L-seryl-[protein] + ATP = O-phospho-L-seryl-[protein] + ADP + H(+). It catalyses the reaction L-threonyl-[protein] + ATP = O-phospho-L-threonyl-[protein] + ADP + H(+). May play a role in signal transduction cascades in terminally differentiated cells. The chain is Cyclin-dependent kinase 18 (CDK18) from Pongo abelii (Sumatran orangutan).